The chain runs to 644 residues: MVTALSDVNNTDNYGAGQIQVLEGLEAVRKRPGMYIGSTSERGLHHLVWEIVDNSIDEALAGYANKIEVVIEKDNWIKVTDNGRGIPVDIQEKMGRPAVEVILTVLHAGGKFGGGGYKVSGGLHGVGSSVVNALSQDLEVYVHRNETIYHQAYKKGVPQFDLKEVGTTDKTGTVIRFKADGEIFTETTVYNYETLQQRIRELAFLNKGIQITLRDERDEENVREDSYHYEGGIKSYVELLNENKEPIHDEPIYIHQSKDDIEVEIAIQYNSGYATNLLTYANNIHTYEGGTHEDGFKRALTRVLNSYGLSSKIMKEEKDRLSGEDTREGMTAIISIKHGDPQFEGQTKTKLGNSEVRQVVDKLFSEHFERFLYENPQVARTVVEKGIMAARARVAAKKAREVTRRKSALDVASLPGKLADCSSKSPEECEIFLVEGDSAGGSTKSGRDSRTQAILPLRGKILNVEKARLDRILNNNEIRQMITAFGTGIGGDFDLAKARYHKIVIMTDADVDGAHIRTLLLTFFYRFMRPLIEAGYVYIAQPPLYKLTQGKQKYYVYNDRELDKLKSELNPTPKWSIARYKGLGEMNADQLWETTMNPEHRALLQVKLEDAIEADQTFEMLMGDVVENRRQFIEDNAVYANLDF.

Residues 429–543 (CEIFLVEGDS…AGYVYIAQPP (115 aa)) enclose the Toprim domain. Mg(2+) contacts are provided by Glu-435, Asp-508, and Asp-510.

The protein belongs to the type II topoisomerase GyrB family. In terms of assembly, heterotetramer, composed of two GyrA and two GyrB chains. In the heterotetramer, GyrA contains the active site tyrosine that forms a transient covalent intermediate with DNA, while GyrB binds cofactors and catalyzes ATP hydrolysis. Mg(2+) is required as a cofactor. The cofactor is Mn(2+). Ca(2+) serves as cofactor.

It localises to the cytoplasm. It catalyses the reaction ATP-dependent breakage, passage and rejoining of double-stranded DNA.. Functionally, a type II topoisomerase that negatively supercoils closed circular double-stranded (ds) DNA in an ATP-dependent manner to modulate DNA topology and maintain chromosomes in an underwound state. Negative supercoiling favors strand separation, and DNA replication, transcription, recombination and repair, all of which involve strand separation. Also able to catalyze the interconversion of other topological isomers of dsDNA rings, including catenanes and knotted rings. Type II topoisomerases break and join 2 DNA strands simultaneously in an ATP-dependent manner. This Staphylococcus aureus (strain Mu50 / ATCC 700699) protein is DNA gyrase subunit B.